Reading from the N-terminus, the 243-residue chain is Anti-H(O) lectin 2 (243 aa).

The N-linked (GlcNAc...) asparagine glycan is linked to Asn-115. Mn(2+) is bound by residues Glu-127 and Asp-129. The Ca(2+) site is built by Asp-129, Asn-136, and Asp-139. Positions 139 and 144 each coordinate Mn(2+).

The protein belongs to the leguminous lectin family. Homodimer.

Its function is as follows. Lactose- or galactose-binding anti-H(O) lectin. In Cytisophyllum sessilifolium (Sessile-leaved cytisus), this protein is Anti-H(O) lectin 2.